Here is a 719-residue protein sequence, read N- to C-terminus: Pesticidal crystal protein Cry1Ia (719 aa).

It belongs to the delta endotoxin family.

In terms of biological role, promotes colloidosmotic lysis by binding to the midgut epithelial cells of certain coleopteran and lepidopteran species. Active on Plutella xylostella and Bombyx mori. This is Pesticidal crystal protein Cry1Ia (cry1Ia) from Bacillus thuringiensis subsp. kurstaki.